A 287-amino-acid polypeptide reads, in one-letter code: ATP synthase gamma chain (287 aa).

This sequence belongs to the ATPase gamma chain family. As to quaternary structure, F-type ATPases have 2 components, CF(1) - the catalytic core - and CF(0) - the membrane proton channel. CF(1) has five subunits: alpha(3), beta(3), gamma(1), delta(1), epsilon(1). CF(0) has three main subunits: a, b and c.

It localises to the cell inner membrane. Functionally, produces ATP from ADP in the presence of a proton gradient across the membrane. The gamma chain is believed to be important in regulating ATPase activity and the flow of protons through the CF(0) complex. The sequence is that of ATP synthase gamma chain from Colwellia psychrerythraea (strain 34H / ATCC BAA-681) (Vibrio psychroerythus).